A 126-amino-acid chain; its full sequence is Aspartate 1-decarboxylase (126 aa).

The active-site Schiff-base intermediate with substrate; via pyruvic acid is the Ser-25. The residue at position 25 (Ser-25) is a Pyruvic acid (Ser). Thr-57 lines the substrate pocket. Tyr-58 acts as the Proton donor in catalysis. Residue Gly-73–Ala-75 coordinates substrate.

It belongs to the PanD family. As to quaternary structure, heterooctamer of four alpha and four beta subunits. Requires pyruvate as cofactor. Post-translationally, is synthesized initially as an inactive proenzyme, which is activated by self-cleavage at a specific serine bond to produce a beta-subunit with a hydroxyl group at its C-terminus and an alpha-subunit with a pyruvoyl group at its N-terminus.

The protein resides in the cytoplasm. It catalyses the reaction L-aspartate + H(+) = beta-alanine + CO2. It functions in the pathway cofactor biosynthesis; (R)-pantothenate biosynthesis; beta-alanine from L-aspartate: step 1/1. Its function is as follows. Catalyzes the pyruvoyl-dependent decarboxylation of aspartate to produce beta-alanine. This is Aspartate 1-decarboxylase from Psychromonas ingrahamii (strain DSM 17664 / CCUG 51855 / 37).